A 662-amino-acid polypeptide reads, in one-letter code: UvrABC system protein B (662 aa).

The Helicase ATP-binding domain maps to 25 to 182 (KGIEKGEKFQ…KKLVEIQYER (158 aa)). 38 to 45 (GVTGSGKT) is a binding site for ATP. A Beta-hairpin motif is present at residues 91-114 (YYDYYQPEAYVAQSDTYIEKDASI). One can recognise a Helicase C-terminal domain in the interval 429–595 (QIDDLYTSIQ…TIIKDIREVI (167 aa)). Residues 622–657 (DKLIEKYEEEMKEAAQNLQFEKAAHLRDVIYKLKRD) form the UVR domain.

This sequence belongs to the UvrB family. In terms of assembly, forms a heterotetramer with UvrA during the search for lesions. Interacts with UvrC in an incision complex.

The protein localises to the cytoplasm. Its function is as follows. The UvrABC repair system catalyzes the recognition and processing of DNA lesions. A damage recognition complex composed of 2 UvrA and 2 UvrB subunits scans DNA for abnormalities. Upon binding of the UvrA(2)B(2) complex to a putative damaged site, the DNA wraps around one UvrB monomer. DNA wrap is dependent on ATP binding by UvrB and probably causes local melting of the DNA helix, facilitating insertion of UvrB beta-hairpin between the DNA strands. Then UvrB probes one DNA strand for the presence of a lesion. If a lesion is found the UvrA subunits dissociate and the UvrB-DNA preincision complex is formed. This complex is subsequently bound by UvrC and the second UvrB is released. If no lesion is found, the DNA wraps around the other UvrB subunit that will check the other stand for damage. In Clostridium botulinum (strain Loch Maree / Type A3), this protein is UvrABC system protein B.